Consider the following 83-residue polypeptide: Alpha-neurotoxin NTX-4 (83 aa).

The N-terminal stretch at 1-21 (MKTLLLTLLVVTIVCLDLGYT) is a signal peptide. Cystine bridges form between Cys-24/Cys-45, Cys-38/Cys-62, Cys-64/Cys-75, and Cys-76/Cys-81.

The protein belongs to the three-finger toxin family. Short-chain subfamily. Type I alpha-neurotoxin sub-subfamily. Expressed by the venom gland.

Its subcellular location is the secreted. In terms of biological role, binds to muscle nicotinic acetylcholine receptor (nAChR) and inhibit acetylcholine from binding to the receptor, thereby impairing neuromuscular transmission. The polypeptide is Alpha-neurotoxin NTX-4 (Naja sputatrix (Malayan spitting cobra)).